Reading from the N-terminus, the 535-residue chain is CTP synthase (535 aa).

The segment at 1–268 (MSTKYIFVTG…DQIVCDHLKL (268 aa)) is amidoligase domain. S14 contacts CTP. Residue S14 coordinates UTP. Residue 15 to 20 (SMGKGI) participates in ATP binding. Y55 provides a ligand contact to L-glutamine. Position 72 (D72) interacts with ATP. D72 and E142 together coordinate Mg(2+). CTP contacts are provided by residues 149-151 (DME), 189-194 (KTKIAQ), and K225. Residues 189–194 (KTKIAQ) and K225 each bind UTP. The 243-residue stretch at 293–535 (KIALVGKYVE…FIRVAVENSK (243 aa)) folds into the Glutamine amidotransferase type-1 domain. G355 serves as a coordination point for L-glutamine. Catalysis depends on C382, which acts as the Nucleophile; for glutamine hydrolysis. L-glutamine contacts are provided by residues 383–386 (LGMQ), E406, and R464. Catalysis depends on residues H509 and E511.

The protein belongs to the CTP synthase family. In terms of assembly, homotetramer.

The enzyme catalyses UTP + L-glutamine + ATP + H2O = CTP + L-glutamate + ADP + phosphate + 2 H(+). It catalyses the reaction L-glutamine + H2O = L-glutamate + NH4(+). The catalysed reaction is UTP + NH4(+) + ATP = CTP + ADP + phosphate + 2 H(+). Its pathway is pyrimidine metabolism; CTP biosynthesis via de novo pathway; CTP from UDP: step 2/2. With respect to regulation, allosterically activated by GTP, when glutamine is the substrate; GTP has no effect on the reaction when ammonia is the substrate. The allosteric effector GTP functions by stabilizing the protein conformation that binds the tetrahedral intermediate(s) formed during glutamine hydrolysis. Inhibited by the product CTP, via allosteric rather than competitive inhibition. Functionally, catalyzes the ATP-dependent amination of UTP to CTP with either L-glutamine or ammonia as the source of nitrogen. Regulates intracellular CTP levels through interactions with the four ribonucleotide triphosphates. This Lactococcus lactis subsp. lactis (strain IL1403) (Streptococcus lactis) protein is CTP synthase.